The following is a 430-amino-acid chain: Histidinol dehydrogenase (430 aa).

NAD(+) is bound by residues Y131, Q192, and N215. S238, Q260, and H263 together coordinate substrate. Residues Q260 and H263 each coordinate Zn(2+). Catalysis depends on proton acceptor residues E328 and H329. Substrate is bound by residues H329, D362, E416, and H421. Residue D362 coordinates Zn(2+). H421 is a Zn(2+) binding site.

This sequence belongs to the histidinol dehydrogenase family. Zn(2+) is required as a cofactor.

It carries out the reaction L-histidinol + 2 NAD(+) + H2O = L-histidine + 2 NADH + 3 H(+). It functions in the pathway amino-acid biosynthesis; L-histidine biosynthesis; L-histidine from 5-phospho-alpha-D-ribose 1-diphosphate: step 9/9. Functionally, catalyzes the sequential NAD-dependent oxidations of L-histidinol to L-histidinaldehyde and then to L-histidine. This Acinetobacter baylyi (strain ATCC 33305 / BD413 / ADP1) protein is Histidinol dehydrogenase.